We begin with the raw amino-acid sequence, 359 residues long: Small ribosomal subunit protein mS22 (359 aa).

The segment at 40–65 (RPQPFEVGQPRRLLSSEAESGSSEVK) is disordered. Residue S54 is modified to Phosphoserine. K210 is modified (N6-acetyllysine).

Belongs to the mitochondrion-specific ribosomal protein mS22 family. In terms of assembly, component of the mitochondrial ribosome small subunit (28S) which comprises a 12S rRNA and about 30 distinct proteins.

Its subcellular location is the mitochondrion. The sequence is that of Small ribosomal subunit protein mS22 (Mrps22) from Mus musculus (Mouse).